A 1025-amino-acid polypeptide reads, in one-letter code: Error-prone DNA polymerase (1025 aa).

This sequence belongs to the DNA polymerase type-C family. DnaE2 subfamily.

The protein resides in the cytoplasm. It carries out the reaction DNA(n) + a 2'-deoxyribonucleoside 5'-triphosphate = DNA(n+1) + diphosphate. DNA polymerase involved in damage-induced mutagenesis and translesion synthesis (TLS). It is not the major replicative DNA polymerase. In Alkalilimnicola ehrlichii (strain ATCC BAA-1101 / DSM 17681 / MLHE-1), this protein is Error-prone DNA polymerase.